Consider the following 361-residue polypeptide: Phospho-N-acetylmuramoyl-pentapeptide-transferase (361 aa).

The next 10 membrane-spanning stretches (helical) occupy residues 21 to 41 (YLTI…LMLG), 69 to 89 (VGTP…SILI), 93 to 113 (WSNI…AIGF), 131 to 151 (SIKF…IILI), 168 to 188 (IILP…IVGS), 200 to 220 (GLAI…AYFS), 240 to 260 (LFII…FNAY), 264 to 284 (IFMG…IAIL), 289 to 309 (ILLF…IIQV), and 338 to 358 (KIIV…LASI).

The protein belongs to the glycosyltransferase 4 family. MraY subfamily. It depends on Mg(2+) as a cofactor.

Its subcellular location is the cell inner membrane. The enzyme catalyses UDP-N-acetyl-alpha-D-muramoyl-L-alanyl-gamma-D-glutamyl-meso-2,6-diaminopimeloyl-D-alanyl-D-alanine + di-trans,octa-cis-undecaprenyl phosphate = di-trans,octa-cis-undecaprenyl diphospho-N-acetyl-alpha-D-muramoyl-L-alanyl-D-glutamyl-meso-2,6-diaminopimeloyl-D-alanyl-D-alanine + UMP. It functions in the pathway cell wall biogenesis; peptidoglycan biosynthesis. In terms of biological role, catalyzes the initial step of the lipid cycle reactions in the biosynthesis of the cell wall peptidoglycan: transfers peptidoglycan precursor phospho-MurNAc-pentapeptide from UDP-MurNAc-pentapeptide onto the lipid carrier undecaprenyl phosphate, yielding undecaprenyl-pyrophosphoryl-MurNAc-pentapeptide, known as lipid I. This chain is Phospho-N-acetylmuramoyl-pentapeptide-transferase, found in Vesicomyosocius okutanii subsp. Calyptogena okutanii (strain HA).